The sequence spans 209 residues: Thymidylate kinase (209 aa).

An ATP-binding site is contributed by 10–17 (GIDGCGKT).

This sequence belongs to the thymidylate kinase family.

It catalyses the reaction dTMP + ATP = dTDP + ADP. Functionally, phosphorylation of dTMP to form dTDP in both de novo and salvage pathways of dTTP synthesis. This is Thymidylate kinase from Synechococcus sp. (strain CC9605).